Here is an 878-residue protein sequence, read N- to C-terminus: Probable LRR receptor-like serine/threonine-protein kinase MEE39 (878 aa).

Positions 1–25 (MKNLCWVFLSLFWFGVFLIIRFAEG) are cleaved as a signal peptide. Over 26 to 514 (QNQEGFISLD…IDKPKKKVAV (489 aa)) the chain is Extracellular. Residues N183, N203, N235, N290, N404, N418, N445, and N466 are each glycosylated (N-linked (GlcNAc...) asparagine). LRR repeat units follow at residues 413–436 (RIIS…QNLA), 437–458 (HLES…FLAT), and 461–483 (SLLV…LRDR). A helical transmembrane segment spans residues 515–535 (KVVAPVASIAAIVVVILLFVF). At 536–878 (KKKMSSRNKP…FDTDVKPKAR (343 aa)) the chain is on the cytoplasmic side. T557 is subject to Phosphothreonine. A Protein kinase domain is found at 566-840 (KNLQRPLGEG…QVIINLKECL (275 aa)). ATP-binding positions include 572–580 (LGEGGFGVV) and K594. Y639 is modified (phosphotyrosine). The active-site Proton acceptor is D691. At S726 the chain carries Phosphoserine. Phosphothreonine is present on residues T727 and T732. Position 740 is a phosphotyrosine (Y740). Over residues 849–869 (RNNQNMDSGHSSDQLNVTVTF) the composition is skewed to polar residues. The tract at residues 849–878 (RNNQNMDSGHSSDQLNVTVTFDTDVKPKAR) is disordered.

It belongs to the protein kinase superfamily. Ser/Thr protein kinase family.

The protein localises to the membrane. It carries out the reaction L-seryl-[protein] + ATP = O-phospho-L-seryl-[protein] + ADP + H(+). The enzyme catalyses L-threonyl-[protein] + ATP = O-phospho-L-threonyl-[protein] + ADP + H(+). Functionally, receptor-like serine/threonine-kinase required during the endosperm development in seeds. This is Probable LRR receptor-like serine/threonine-protein kinase MEE39 (MEE39) from Arabidopsis thaliana (Mouse-ear cress).